Reading from the N-terminus, the 258-residue chain is Flagellar brake protein YcgR (258 aa).

A PilZ domain is found at 131-248 (QKREYYRVAT…ALSLIQRYIT (118 aa)).

The protein belongs to the YcgR family. As to quaternary structure, monomer. Interacts with the flagellar basal bodies.

The protein resides in the bacterial flagellum basal body. In terms of biological role, acts as a flagellar brake, regulating swimming and swarming in a bis-(3'-5') cyclic diguanylic acid (c-di-GMP)-dependent manner. Binds 1 c-di-GMP dimer per subunit. Increasing levels of c-di-GMP lead to decreased motility. The chain is Flagellar brake protein YcgR from Nitrosospira multiformis (strain ATCC 25196 / NCIMB 11849 / C 71).